The following is a 310-amino-acid chain: Leucine carboxyl methyltransferase 1 (310 aa).

S-adenosyl-L-methionine is bound by residues R50, G75, D100, D145–I146, and E169.

Belongs to the methyltransferase superfamily. LCMT family.

The enzyme catalyses [phosphatase 2A protein]-C-terminal L-leucine + S-adenosyl-L-methionine = [phosphatase 2A protein]-C-terminal L-leucine methyl ester + S-adenosyl-L-homocysteine. Methylates the carboxyl group of the C-terminal leucine residue of protein phosphatase 2A catalytic subunits to form alpha-leucine ester residues. The sequence is that of Leucine carboxyl methyltransferase 1 (ppm1) from Schizosaccharomyces pombe (strain 972 / ATCC 24843) (Fission yeast).